Here is a 406-residue protein sequence, read N- to C-terminus: Endoplasmic reticulum resident protein 44 (406 aa).

The signal sequence occupies residues 1–29 (MNPAVFLSLADLRCSLLLLVTSIFTPITA). Residues 30–138 (EIASLDSENI…VKALADYIRQ (109 aa)) form the Thioredoxin domain. Intrachain disulfides connect Cys189-Cys241 and Cys301-Cys318. The tract at residues 236–285 (WIQDKCVPLVREITFENGEELTEEGLPFLILFHMKDDTESLEIFQNEVAR) is interaction with ITPR1. The interval 360–387 (FHHGPDPTDTAPGEQDQDVASSPPESSF) is disordered. The segment covering 377–387 (DVASSPPESSF) has biased composition (polar residues). A Prevents secretion from ER motif is present at residues 403 to 406 (RDEL).

In terms of assembly, forms mixed disulfides with both ERO1A and ERO1B and cargo folding intermediates; the interactions with ERO1A and ERO1B result in their retention in the endoplasmic reticulum. Directly interacts with ITPR1 in a pH-, redox state- and calcium-dependent manner, but not with ITPR2 or ITPR3. The strength of this interaction inversely correlates with calcium concentration. In terms of tissue distribution, widely expressed.

It localises to the endoplasmic reticulum lumen. Its function is as follows. Mediates thiol-dependent retention in the early secretory pathway, forming mixed disulfides with substrate proteins through its conserved CRFS motif. Inhibits the calcium channel activity of ITPR1. May have a role in the control of oxidative protein folding in the endoplasmic reticulum. Required to retain ERO1A and ERO1B in the endoplasmic reticulum. The chain is Endoplasmic reticulum resident protein 44 (Erp44) from Mus musculus (Mouse).